Consider the following 351-residue polypeptide: Histidinol-phosphate aminotransferase (351 aa).

At Lys221 the chain carries N6-(pyridoxal phosphate)lysine.

Belongs to the class-II pyridoxal-phosphate-dependent aminotransferase family. Histidinol-phosphate aminotransferase subfamily. In terms of assembly, homodimer. Pyridoxal 5'-phosphate is required as a cofactor.

The enzyme catalyses L-histidinol phosphate + 2-oxoglutarate = 3-(imidazol-4-yl)-2-oxopropyl phosphate + L-glutamate. The protein operates within amino-acid biosynthesis; L-histidine biosynthesis; L-histidine from 5-phospho-alpha-D-ribose 1-diphosphate: step 7/9. The polypeptide is Histidinol-phosphate aminotransferase (Staphylococcus epidermidis (strain ATCC 12228 / FDA PCI 1200)).